Reading from the N-terminus, the 290-residue chain is Type II secretion system protein C (290 aa).

At 1 to 28 the chain is on the cytoplasmic side; the sequence is MTLPFRNDLLSSLLARCKTVPLSRFSQP. Residues 29–46 form a helical membrane-spanning segment; sequence LFWLLLLLLAHQCAGLTW. At 47-290 the chain is on the periplasmic side; the sequence is RLLDLGSQQA…LYDVYVGLSE (244 aa).

It belongs to the GSP C family.

It is found in the cell inner membrane. Involved in a type II secretion system (T2SS, formerly general secretion pathway, GSP) for the export of proteins. The polypeptide is Type II secretion system protein C (exeC) (Aeromonas hydrophila).